A 464-amino-acid polypeptide reads, in one-letter code: 3-isopropylmalate dehydratase large subunit (464 aa).

Residues Cys-337, Cys-397, and Cys-400 each coordinate [4Fe-4S] cluster.

The protein belongs to the aconitase/IPM isomerase family. LeuC type 1 subfamily. In terms of assembly, heterodimer of LeuC and LeuD. It depends on [4Fe-4S] cluster as a cofactor.

It carries out the reaction (2R,3S)-3-isopropylmalate = (2S)-2-isopropylmalate. It participates in amino-acid biosynthesis; L-leucine biosynthesis; L-leucine from 3-methyl-2-oxobutanoate: step 2/4. Its function is as follows. Catalyzes the isomerization between 2-isopropylmalate and 3-isopropylmalate, via the formation of 2-isopropylmaleate. In Bacillus thuringiensis subsp. konkukian (strain 97-27), this protein is 3-isopropylmalate dehydratase large subunit.